A 136-amino-acid chain; its full sequence is 6,7-dimethyl-8-ribityllumazine synthase (136 aa).

Residues phenylalanine 11, 43–45 (SFD), and 67–69 (AVI) each bind 5-amino-6-(D-ribitylamino)uracil. Residue 72–73 (ET) participates in (2S)-2-hydroxy-3-oxobutyl phosphate binding. Catalysis depends on histidine 75, which acts as the Proton donor. Leucine 100 serves as a coordination point for 5-amino-6-(D-ribitylamino)uracil. Residue arginine 115 participates in (2S)-2-hydroxy-3-oxobutyl phosphate binding.

It belongs to the DMRL synthase family.

It catalyses the reaction (2S)-2-hydroxy-3-oxobutyl phosphate + 5-amino-6-(D-ribitylamino)uracil = 6,7-dimethyl-8-(1-D-ribityl)lumazine + phosphate + 2 H2O + H(+). Its pathway is cofactor biosynthesis; riboflavin biosynthesis; riboflavin from 2-hydroxy-3-oxobutyl phosphate and 5-amino-6-(D-ribitylamino)uracil: step 1/2. Its function is as follows. Catalyzes the formation of 6,7-dimethyl-8-ribityllumazine by condensation of 5-amino-6-(D-ribitylamino)uracil with 3,4-dihydroxy-2-butanone 4-phosphate. This is the penultimate step in the biosynthesis of riboflavin. This chain is 6,7-dimethyl-8-ribityllumazine synthase, found in Picrophilus torridus (strain ATCC 700027 / DSM 9790 / JCM 10055 / NBRC 100828 / KAW 2/3).